Reading from the N-terminus, the 123-residue chain is Holo-[acyl-carrier-protein] synthase (123 aa).

Mg(2+)-binding residues include Asp7 and Glu56.

It belongs to the P-Pant transferase superfamily. AcpS family. Mg(2+) is required as a cofactor.

It is found in the cytoplasm. The catalysed reaction is apo-[ACP] + CoA = holo-[ACP] + adenosine 3',5'-bisphosphate + H(+). In terms of biological role, transfers the 4'-phosphopantetheine moiety from coenzyme A to a Ser of acyl-carrier-protein. The chain is Holo-[acyl-carrier-protein] synthase from Carboxydothermus hydrogenoformans (strain ATCC BAA-161 / DSM 6008 / Z-2901).